Reading from the N-terminus, the 748-residue chain is Acyl-coenzyme A oxidase (748 aa).

The protein belongs to the acyl-CoA oxidase family. Homooctamer. It depends on FAD as a cofactor.

The protein resides in the peroxisome. The enzyme catalyses a 2,3-saturated acyl-CoA + O2 = a (2E)-enoyl-CoA + H2O2. Its pathway is lipid metabolism; peroxisomal fatty acid beta-oxidation. In Saccharomyces cerevisiae (strain ATCC 204508 / S288c) (Baker's yeast), this protein is Acyl-coenzyme A oxidase (POX1).